The primary structure comprises 511 residues: Probable lipid II flippase MurJ (511 aa).

The next 13 helical transmembrane spans lie at Ile31–Leu51, Leu90–Ile110, Leu130–Ile150, Ile159–Ala179, Phe182–Val202, Ile237–Leu257, Leu271–Leu291, Cys314–Val334, Leu354–Phe374, Pro383–Gly403, His407–Trp427, Ala443–Leu463, and Leu481–Phe501.

The protein belongs to the MurJ/MviN family.

The protein resides in the cell inner membrane. It participates in cell wall biogenesis; peptidoglycan biosynthesis. Its function is as follows. Involved in peptidoglycan biosynthesis. Transports lipid-linked peptidoglycan precursors from the inner to the outer leaflet of the cytoplasmic membrane. This chain is Probable lipid II flippase MurJ, found in Escherichia coli O157:H7.